Consider the following 271-residue polypeptide: Putative phosphoenolpyruvate synthase regulatory protein (271 aa).

An ADP-binding site is contributed by 151–158 (GVSRSGKT).

Belongs to the pyruvate, phosphate/water dikinase regulatory protein family. PSRP subfamily.

The enzyme catalyses [pyruvate, water dikinase] + ADP = [pyruvate, water dikinase]-phosphate + AMP + H(+). The catalysed reaction is [pyruvate, water dikinase]-phosphate + phosphate + H(+) = [pyruvate, water dikinase] + diphosphate. In terms of biological role, bifunctional serine/threonine kinase and phosphorylase involved in the regulation of the phosphoenolpyruvate synthase (PEPS) by catalyzing its phosphorylation/dephosphorylation. This chain is Putative phosphoenolpyruvate synthase regulatory protein, found in Burkholderia orbicola (strain MC0-3).